The following is a 1176-amino-acid chain: DNA-directed RNA polymerase subunit beta (1176 aa).

Residues 13–30 (TDASLHQGRPQSSSNSSV) are compositionally biased toward polar residues. The tract at residues 13-35 (TDASLHQGRPQSSSNSSVPGAPN) is disordered.

This sequence belongs to the RNA polymerase beta chain family. The RNAP catalytic core consists of 2 alpha, 1 beta, 1 beta' and 1 omega subunit. When a sigma factor is associated with the core the holoenzyme is formed, which can initiate transcription.

The catalysed reaction is RNA(n) + a ribonucleoside 5'-triphosphate = RNA(n+1) + diphosphate. In terms of biological role, DNA-dependent RNA polymerase catalyzes the transcription of DNA into RNA using the four ribonucleoside triphosphates as substrates. The protein is DNA-directed RNA polymerase subunit beta of Mycobacterium ulcerans (strain Agy99).